The primary structure comprises 508 residues: UDP-N-acetylmuramyl-tripeptide synthetase (508 aa).

Ser35 contributes to the UDP-N-acetyl-alpha-D-muramoyl-L-alanyl-D-glutamate binding site. Gly118–Ser124 contributes to the ATP binding site. UDP-N-acetyl-alpha-D-muramoyl-L-alanyl-D-glutamate is bound by residues Ser163–Thr164, Thr190, and Arg200. Lys232 carries the post-translational modification N6-carboxylysine.

This sequence belongs to the MurCDEF family. MurE subfamily. Post-translationally, carboxylation is probably crucial for Mg(2+) binding and, consequently, for the gamma-phosphate positioning of ATP.

It localises to the cytoplasm. The protein operates within cell wall biogenesis; peptidoglycan biosynthesis. In terms of biological role, catalyzes the addition of an amino acid to the nucleotide precursor UDP-N-acetylmuramoyl-L-alanyl-D-glutamate (UMAG) in the biosynthesis of bacterial cell-wall peptidoglycan. This chain is UDP-N-acetylmuramyl-tripeptide synthetase, found in Borrelia garinii subsp. bavariensis (strain ATCC BAA-2496 / DSM 23469 / PBi) (Borreliella bavariensis).